Reading from the N-terminus, the 330-residue chain is Exostosin-like 2 (330 aa).

At 1–21 the chain is on the cytoplasmic side; the sequence is MMRGCHICKLPGRVMGIRVLR. A helical; Signal-anchor for type II membrane protein transmembrane segment spans residues 22-42; it reads FSLVVILVLLLVAGALTNLLP. Topologically, residues 43–330 are lumenal; that stretch reads NIKEDKMLTL…FPYANHKSKM (288 aa). Q72 contributes to the UDP-N-acetyl-alpha-D-galactosamine binding site. Q72 lines the UDP-N-acetyl-alpha-D-glucosamine pocket. N75 carries an N-linked (GlcNAc...) asparagine glycan. UDP-N-acetyl-alpha-D-galactosamine contacts are provided by R76, N101, N130, R135, D151, D152, D153, and D245. 10 residues coordinate UDP-N-acetyl-alpha-D-glucosamine: R76, N101, N130, R135, D151, D152, D153, D245, D246, and R293. Mn(2+) is bound at residue D153. C244 and C296 are joined by a disulfide. D246 is an active-site residue. R293 is a binding site for UDP-N-acetyl-alpha-D-galactosamine.

This sequence belongs to the glycosyltransferase 47 family. The cofactor is Mn(2+).

It is found in the endoplasmic reticulum membrane. It carries out the reaction 3-O-(beta-D-GlcA-(1-&gt;3)-beta-D-Gal-(1-&gt;3)-beta-D-Gal-(1-&gt;4)-beta-D-Xyl)-L-seryl-[protein] + UDP-N-acetyl-alpha-D-glucosamine = 3-O-(alpha-D-GlcNAc-(1-&gt;4)-beta-D-GlcA-(1-&gt;3)-beta-D-Gal-(1-&gt;3)-beta-D-Gal-(1-&gt;4)-beta-D-Xyl)-L-seryl-[protein] + UDP + H(+). Functionally, glycosyltransferase required for the biosynthesis of heparan-sulfate and responsible for the alternating addition of beta-1-4-linked glucuronic acid (GlcA) and alpha-1-4-linked N-acetylglucosamine (GlcNAc) units to nascent heparan sulfate chains. The chain is Exostosin-like 2 (Extl2) from Mus musculus (Mouse).